Here is a 405-residue protein sequence, read N- to C-terminus: Envelope glycoprotein G (405 aa).

An N-terminal signal peptide occupies residues 1 to 19 (MLAVGATLCLLSFLTGATG). 5 N-linked (GlcNAc...) asparagine; by host glycosylation sites follow: asparagine 83, asparagine 138, asparagine 174, asparagine 221, and asparagine 288. The helical transmembrane segment at 389 to 405 (LKTVYICLALIGLAHVP) threads the bilayer.

It belongs to the alphaherpesvirinae glycoprotein G family.

The protein resides in the virion membrane. Functionally, chemokine-binding protein that inhibits neutrophils' chemotaxis. The polypeptide is Envelope glycoprotein G (gG) (Equine herpesvirus 4 (strain 1942) (EHV-4)).